Here is a 206-residue protein sequence, read N- to C-terminus: Thymidylate kinase (206 aa).

11–18 (GIDGAGKT) contributes to the ATP binding site.

Belongs to the thymidylate kinase family.

It catalyses the reaction dTMP + ATP = dTDP + ADP. Its function is as follows. Phosphorylation of dTMP to form dTDP in both de novo and salvage pathways of dTTP synthesis. The protein is Thymidylate kinase of Burkholderia pseudomallei (strain 1106a).